Consider the following 669-residue polypeptide: Armadillo repeat-containing protein gudu (669 aa).

Over residues 1 to 10 the composition is skewed to polar residues; sequence MIGTSSGTSH. The interval 1–53 is disordered; the sequence is MIGTSSGTSHNRSRKKKEQCGSCPNRFSKDKRQVAAEDSDTTEVESSTDEEER. The span at 37–51 shows a compositional bias: acidic residues; sequence EDSDTTEVESSTDEE. 10 ARM repeats span residues 100–139, 141–180, 240–279, 281–320, 322–365, 367–406, 408–447, 492–531, 574–613, and 615–654; these read QINQFAISDIGGLDVLVNILECSDTKCCLGALKVLSDITL, IDIRKTIVDLDGIPLIVDILNSSMKDLKTMAAETLANVCK, KHNMEQMRKSGIVPLMAQLLKSCHIDVVIPIMGTVRKCSS, PKFQLAITTEGMIPDIVSHLSSENTELKMEGSTAIYKCAF, GTTR…MCAV, DANVKVLDQLRTVNHLVALLNDECDEVLTNVTGAISECVR, QSNREQLRQAGGLPAMVSLLNSSHAPLLENLAKGLKECAE, DSAELVRSLVGAMELVVGLLKSKDIMVLSAVCAAIATIAQ, GNNTEELGRLRTVTPIVTYMTSDNPLVHRSTAMALEKLSM, and PQNCITMHQSGVVPFLLECIGSTNKELQLAAAGCLRNIRE.

As to expression, highly expressed in testis.

Its function is as follows. Important for spermatogenesis where it may have a role in sperm individualization. The protein is Armadillo repeat-containing protein gudu of Drosophila melanogaster (Fruit fly).